The primary structure comprises 172 residues: MPLLDSFTVDHTRMNAPAVRVAKTMQTPKGDTITVFDLRFTMPNKDILSERGIHTLEHLYAGFMRNHLNGSQVEIIDISPMGCRTGFYMSLIGAPTEQQVAQAWLAAMQDVLKVESQEQIPELNEYQCGTAAMHSLEEAKAIAKNVIAAGISVNRNDELALPESMLNELKVH.

The Fe cation site is built by H54, H58, and C128.

Belongs to the LuxS family. Homodimer. The cofactor is Fe cation.

It carries out the reaction S-(5-deoxy-D-ribos-5-yl)-L-homocysteine = (S)-4,5-dihydroxypentane-2,3-dione + L-homocysteine. In terms of biological role, involved in the synthesis of autoinducer 2 (AI-2) which is secreted by bacteria and is used to communicate both the cell density and the metabolic potential of the environment. The regulation of gene expression in response to changes in cell density is called quorum sensing. Catalyzes the transformation of S-ribosylhomocysteine (RHC) to homocysteine (HC) and 4,5-dihydroxy-2,3-pentadione (DPD). The chain is S-ribosylhomocysteine lyase from Vibrio cholerae serotype O1 (strain ATCC 39541 / Classical Ogawa 395 / O395).